Here is a 718-residue protein sequence, read N- to C-terminus: Threonine--tRNA ligase, mitochondrial (718 aa).

Position 52 is a phosphoserine (Ser-52). One can recognise a TGS domain in the interval 55–121; it reads QKEPRTIKIS…ETDSDLRFLT (67 aa).

The protein belongs to the class-II aminoacyl-tRNA synthetase family. Homodimer.

It localises to the mitochondrion matrix. The enzyme catalyses tRNA(Thr) + L-threonine + ATP = L-threonyl-tRNA(Thr) + AMP + diphosphate + H(+). Its function is as follows. Catalyzes the attachment of threonine to tRNA(Thr) in a two-step reaction: threonine is first activated by ATP to form Thr-AMP and then transferred to the acceptor end of tRNA(Thr). Also edits incorrectly charged tRNA(Thr) via its editing domain. The chain is Threonine--tRNA ligase, mitochondrial (TARS2) from Homo sapiens (Human).